The chain runs to 95 residues: MAECLSQTDKGVVLSVHVQPRASRNELAGLQGESLKIRLTSPPVEGAANKLCREFLAKLLGVAKSRVTLVSGDKSRHKRLLIEGVTLDEVRNKLL.

It belongs to the UPF0235 family.

The chain is UPF0235 protein Pcar_0617 from Syntrophotalea carbinolica (strain DSM 2380 / NBRC 103641 / GraBd1) (Pelobacter carbinolicus).